An 854-amino-acid chain; its full sequence is MAIKSTEKHTPMMQQYLRLKSENPDILLFYRMGDFYELFYDDAKRASQLLEISLTKRGSSAGEPIPMAGIPYHAVEGYLAKLVQQGESVAICEQVGDPATSKGPVERKVVRIVTPGTVTDEALLPERFDNLIAAIYHHKGQFGYATLDITSGRFKVSEPNTEEAMLAELQRTAPTELLFSEDFEPVHLLEKRNGNRRRPVWEFELDTAKQQLNNQFGTRDLVGFGVEKAEFGLCAAGCLIQYVKDTQRTTLPHIRSIIMDHQDDSVILDAATRRNLEITQNLAGGFNHTLAEILDHTSTAMGSRLLKRWLHQPVRTHDVLNQRLDAIGELKESGLFADMAPQLKNIGDVERILARLALRSARPRDLARLRNALQQLPELSQTTQEFQQDHLLTLAASAQPIDSICELLERAIKENPPVVIRDGGVLADGYNEELDQWRDLANGATQYLEKLEQEERERHDIDTLKVGYNNVHGFYIQISKGQSHKAPAHYVRRQTLKNAERYIIPELKEHEDKVLNSKSKALAIEKRLWEELFDQLLPHLEQLQSMANAISELDVLSNLAERADTLNYCRPVLTKETGINIEGGRHPVVEQVMSDPFIANPIKLNPDRKMLIITGPNMGGKSTYMRQTALIALMAHVGCYVPADSAEIGTLDRIFTRIGASDDLASGRSTFMVEMTETANILHNATKHSLVLMDEIGRGTSTYDGLSLAWASAEWLATKINAMTLFATHYFELTELPNLFTGLANVHLDAVEHGDEIAFMHAVQEGAANKSYGLAVASLAGVPKSVIKKAKQKLQHLESGQVPVPATSTTVKEEHQLSLIPEISEVEEALAHVNPDDLTPRQALEELYRLKALL.

615-622 (GPNMGGKS) is a binding site for ATP.

The protein belongs to the DNA mismatch repair MutS family.

In terms of biological role, this protein is involved in the repair of mismatches in DNA. It is possible that it carries out the mismatch recognition step. This protein has a weak ATPase activity. The chain is DNA mismatch repair protein MutS from Aliivibrio fischeri (strain ATCC 700601 / ES114) (Vibrio fischeri).